The following is a 347-amino-acid chain: LRP2-binding protein (347 aa).

One copy of the TPR repeat lies at 59-92; the sequence is TLAYFLRGQLYFEEGWYEEALEQFEEIKEKDHQA. Sel1-like repeat units follow at residues 93 to 125, 133 to 168, 173 to 206, 207 to 242, 243 to 277, and 297 to 332; these read TYQL…DSPC, FAAA…DNGN, VKAQ…GNGN, LESQ…ERGN, VYAQ…EVHD, and AMAS…RLNP.

In terms of assembly, interacts with LRP2.

The protein localises to the cytoplasm. In terms of biological role, may act as an adapter that regulates LRP2 function. The protein is LRP2-binding protein (LRP2BP) of Homo sapiens (Human).